The following is a 103-amino-acid chain: Serine rich endogenous peptide 9 (103 aa).

The first 25 residues, 1 to 25 (MENIFFSKLTQVFIVALLCIFIYRT), serve as a signal peptide directing secretion. A disordered region spans residues 54–103 (IYVKPPPLKSKDSNQKGKRGETYYKPNSEIGTGPSHSGHGGSSIEHVSSP). The segment covering 62 to 75 (KSKDSNQKGKRGET) has biased composition (basic and acidic residues). Residues 82–96 (EIGTGPSHSGHGGSS) carry the SCOOP motif motif. The segment covering 84 to 103 (GTGPSHSGHGGSSIEHVSSP) has biased composition (low complexity). Positions 88 to 90 (SHS) match the SxS motif essential for MIK2 binding motif.

This sequence belongs to the serine rich endogenous peptide (SCOOP) phytocytokine family. In terms of assembly, interacts with MIK2 (via extracellular leucine-rich repeat domain); this interaction triggers the formation of complex between MIK2 and the BAK1/SERK3 and SERK4 coreceptors, and subsequent BAK1 activation by phosphorylation. As to expression, mostly expressed in seedlings shoots and roots, and, to a lower extent, in leaves, but barely in flowers.

It localises to the cell membrane. The protein localises to the secreted. It is found in the extracellular space. Its subcellular location is the apoplast. Functionally, brassicaceae-specific phytocytokine (plant endogenous peptide released into the apoplast) perceived by MIK2 in a BAK1/SERK3 and SERK4 coreceptors-dependent manner, that modulates various physiological and antimicrobial processes including growth prevention and reactive oxygen species (ROS) response regulation. The sequence is that of Serine rich endogenous peptide 9 from Arabidopsis thaliana (Mouse-ear cress).